We begin with the raw amino-acid sequence, 454 residues long: Notoamide biosynthesis cluster protein M' (454 aa).

N-linked (GlcNAc...) asparagine glycosylation is found at asparagine 51 and asparagine 74. Residues 205–219 are compositionally biased toward basic residues; that stretch reads KARSKEKKPKRKKSK. A disordered region spans residues 205-224; sequence KARSKEKKPKRKKSKAEKEH. 2 helical membrane passes run 334 to 354 and 375 to 395; these read MTTV…SGLF and FWMY…VWGV.

The protein resides in the membrane. Functionally, part of the gene cluster that mediates the biosynthesis of notoamide, a fungal indole alkaloid that belongs to a family of natural products containing a characteristic bicyclo[2.2.2]diazaoctane core. The first step of notoamide biosynthesis involves coupling of L-proline and L-tryptophan by the bimodular NRPS notE', to produce cyclo-L-tryptophan-L-proline called brevianamide F. The reverse prenyltransferase notF' then acts as a deoxybrevianamide E synthase and converts brevianamide F to deoxybrevianamide E via reverse prenylation at C-2 of the indole ring leading to the bicyclo[2.2.2]diazaoctane core. Deoxybrevianamide E is further hydroxylated at C-6 of the indole ring, likely catalyzed by the cytochrome P450 monooxygenase notG', to yield 6-hydroxy-deoxybrevianamide E. 6-hydroxy-deoxybrevianamide E is a specific substrate of the prenyltransferase notC' for normal prenylation at C-7 to produce 6-hydroxy-7-prenyl-deoxybrevianamide, also called notoamide S. As the proposed pivotal branching point in notoamide biosynthesis, notoamide S can be diverted to notoamide E through an oxidative pyran ring closure putatively catalyzed by either notH' cytochrome P450 monooxygenase or the notD' FAD-linked oxidoreductase. This step would be followed by an indole 2,3-epoxidation-initiated pinacol-like rearrangement catalyzed by the notB' FAD-dependent monooxygenase leading to the formation of notoamide C and notoamide D. On the other hand notoamide S is converted to notoamide T by notH' (or notD'), a bifunctional oxidase that also functions as the intramolecular Diels-Alderase responsible for generation of (-)-notoamide T. To generate antipodal (+)-notoaminide T, notH (or notD) in Aspergillus strain MF297-2 is expected to catalyze a Diels-Alder reaction leading to the opposite stereochemistry. The remaining oxidoreductase notD' (or notH') likely catalyzes the oxidative pyran ring formation to yield (-)-stephacidin A. The FAD-dependent monooxygenase notI' is highly similar to notB' and is predicted to catalyze a similar conversion from (-)-stephacidin A to (+)-notoamide B via the 2,3-epoxidation of (-)-stephacidin A followed by a pinacol-type rearrangement. Finally, it remains unclear which enzyme could be responsible for the final hydroxylation steps leading to notoamide A and sclerotiamide. The function of notM' in the notoamide biosynthesis has not been determined yet. In Aspergillus versicolor, this protein is Notoamide biosynthesis cluster protein M'.